Reading from the N-terminus, the 347-residue chain is Very-long-chain 3-oxoacyl-CoA reductase (347 aa).

Residues 20-40 traverse the membrane as a helical segment; that stretch reads LLWVVFGLGVLKCTTLSLRFL. NADP(+) is bound by residues Asp120, Asn147, Tyr223, Lys227, Val256, and Ser258. The active-site Proton donor is the Tyr223. Residue Lys227 is the Lowers pKa of active site Tyr of the active site.

It belongs to the short-chain dehydrogenases/reductases (SDR) family. Interacts with the fatty acid elongation system components ELO3 and TSC13.

The protein resides in the endoplasmic reticulum membrane. The enzyme catalyses a very-long-chain (3R)-3-hydroxyacyl-CoA + NADP(+) = a very-long-chain 3-oxoacyl-CoA + NADPH + H(+). It catalyses the reaction 3-oxooctadecanoyl-CoA + NADPH + H(+) = (3R)-hydroxyoctadecanoyl-CoA + NADP(+). It carries out the reaction 3-oxoeicosanoyl-CoA + NADPH + H(+) = (3R)-hydroxyeicosanoyl-CoA + NADP(+). The catalysed reaction is 3-oxodocosanoyl-CoA + NADPH + H(+) = (3R)-hydroxydocosanoyl-CoA + NADP(+). The enzyme catalyses 3-oxotetracosanoyl-CoA + NADPH + H(+) = (3R)-hydroxytetracosanoyl-CoA + NADP(+). It catalyses the reaction 3-oxohexacosanoyl-CoA + NADPH + H(+) = (3R)-hydroxyhexacosanoyl-CoA + NADP(+). The protein operates within lipid metabolism; fatty acid biosynthesis. In terms of biological role, component of the microsomal membrane bound fatty acid elongation system, which produces the 26-carbon very long-chain fatty acids (VLCFA) from palmitate. Catalyzes the reduction of the 3-ketoacyl-CoA intermediate that is formed in each cycle of fatty acid elongation. VLCFAs serve as precursors for ceramide and sphingolipids. The polypeptide is Very-long-chain 3-oxoacyl-CoA reductase (IFA38) (Saccharomyces cerevisiae (strain ATCC 204508 / S288c) (Baker's yeast)).